Consider the following 153-residue polypeptide: D-aminoacyl-tRNA deacylase (153 aa).

The Gly-cisPro motif, important for rejection of L-amino acids signature appears at 137 to 138; the sequence is GP.

The protein belongs to the DTD family. In terms of assembly, homodimer.

The protein resides in the cytoplasm. The enzyme catalyses glycyl-tRNA(Ala) + H2O = tRNA(Ala) + glycine + H(+). It carries out the reaction a D-aminoacyl-tRNA + H2O = a tRNA + a D-alpha-amino acid + H(+). In terms of biological role, an aminoacyl-tRNA editing enzyme that deacylates mischarged D-aminoacyl-tRNAs. Also deacylates mischarged glycyl-tRNA(Ala), protecting cells against glycine mischarging by AlaRS. Acts via tRNA-based rather than protein-based catalysis; rejects L-amino acids rather than detecting D-amino acids in the active site. By recycling D-aminoacyl-tRNA to D-amino acids and free tRNA molecules, this enzyme counteracts the toxicity associated with the formation of D-aminoacyl-tRNA entities in vivo and helps enforce protein L-homochirality. The sequence is that of D-aminoacyl-tRNA deacylase from Methylococcus capsulatus (strain ATCC 33009 / NCIMB 11132 / Bath).